We begin with the raw amino-acid sequence, 340 residues long: Cell division protein FtsQ (340 aa).

Residues 1 to 41 are disordered; sequence MQGLNPFHRDQGAGGRPAPVRPAPARPAPVAPRTPRKDPAP. The Cytoplasmic portion of the chain corresponds to 1–55; it reads MQGLNPFHRDQGAGGRPAPVRPAPARPAPVAPRTPRKDPAPSRLAYRLNRMMLRP. The span at 19–32 shows a compositional bias: pro residues; that stretch reads PVRPAPARPAPVAP. Residues 56–78 traverse the membrane as a helical segment; that stretch reads LVRRLVHVGLPAFLAALVAGIWL. Residues 79-340 lie on the Periplasmic side of the membrane; the sequence is SDDTRRANLT…NAAKAKKKSG (262 aa). The POTRA domain maps to 104–172; it reads FMVKMMTIEG…GVLSAVVTER (69 aa). Residues 308 to 340 form a disordered region; sequence RQARGQPELGPDGTPLAPEATAGNAAKAKKKSG. Residues 324–333 show a composition bias toward low complexity; it reads APEATAGNAA.

The protein belongs to the FtsQ/DivIB family. FtsQ subfamily.

It is found in the cell inner membrane. Its function is as follows. Essential cell division protein. This Paracoccus denitrificans (strain Pd 1222) protein is Cell division protein FtsQ.